Reading from the N-terminus, the 530-residue chain is Tryptophan 7-halogenase RebH (530 aa).

FAD-binding residues include G13, T15, A16, A39, D41, E49, and A50. The active site involves K79. Positions 197 and 348 each coordinate FAD. Position 357 (E357) interacts with L-tryptophan. Residues T359 and G360 each contribute to the chloride site. I361 contributes to the FAD binding site. Residues Y454, Y455, E461, and F465 each coordinate L-tryptophan.

This sequence belongs to the flavin-dependent halogenase family. Bacterial tryptophan halogenase subfamily. Homodimer.

The catalysed reaction is L-tryptophan + FADH2 + chloride + O2 = 7-chloro-L-tryptophan + FAD + 2 H2O. In terms of biological role, involved in the biosynthesis of the indolocarbazole antitumor agent rebeccamycin. Catalyzes the chlorination of tryptophan (Trp) at C7 position to yield 7-chlorotryptophan. It is also able to use bromide ions to generate monobrominated Trp. The protein is Tryptophan 7-halogenase RebH (rebH) of Lentzea aerocolonigenes (Lechevalieria aerocolonigenes).